The sequence spans 597 residues: Plasmepsin V (597 aa).

Topologically, residues 1–551 (MNNYFLRKEN…EKENIFLKVS (551 aa)) are lumenal. The stretch at 33-88 (CNNVENKIDNVGKKIENVGKKIGDMENKNDNVENKNDNVENKNDNVGNKNDNVKNA) forms a coiled coil. Residues 58–75 (ENKNDNVENKNDNVENKN) show a composition bias toward basic and acidic residues. Residues 58-83 (ENKNDNVENKNDNVENKNDNVGNKND) form a disordered region. The Peptidase A1 domain maps to 107–521 (YFLDIDIGKP…DLQQNQIAFI (415 aa)). Asp125 is an active-site residue. 7 cysteine pairs are disulfide-bonded: Cys135–Cys218, Cys138–Cys141, Cys162–Cys173, Cys167–Cys178, Cys266–Cys525, Cys396–Cys441, and Cys450–Cys486. A compositionally biased stretch (basic and acidic residues) spans 289–298 (KEKQKMDKSD). Residues 289 to 323 (KEKQKMDKSDNNSSNKGNVSIKLKNNDKNDDEENN) are disordered. Residues 299 to 311 (NNSSNKGNVSIKL) show a composition bias toward low complexity. Asp372 is an active-site residue. A helical transmembrane segment spans residues 552–572 (YINLYCLWLLLALTILLSLIL). Residues 573–597 (YVRKMFYMDYFPLSDQNKSPIQEST) are Cytoplasmic-facing.

It belongs to the peptidase A1 family. In terms of assembly, component of a complex composed of SPC25 and PMV; the interaction is mediated via the transmembrane domains. The complex interacts with the SEC61 channel-forming translocon complex and is involved in the recognition and import of PEXEL motif-containing proteins into the ER for subsequent export. In terms of processing, it is not clear if the zymogen has a cleavable propeptide. In vitro, appears to be cleaved between Asn-87 and Ala-88. Cleavage of the putative propeptide is dispensable for catalytic activity.

The protein resides in the endoplasmic reticulum membrane. During the asexual blood stage, plays an essential role in the export of several proteins into the host erythrocytes by cleaving the pentameric localization motif RxLxE/Q/D (termed Plasmodium export element (PEXEL)) located downstream of the N-terminal secretory signal sequence. Specifically, cleaves after the leucine residue in the RxLxE/Q/D (or RxLxxE) motif of exported proteins including RESA, EMP2, EMP3, KAHRP, RIF/Rifin and STEVOR. Also, by regulating protein export, plays an essential role in gametocyte development and thus parasite transmission to the mosquito vector. In Plasmodium falciparum (isolate HB3), this protein is Plasmepsin V.